A 94-amino-acid chain; its full sequence is Large ribosomal subunit protein uL23 (94 aa).

It belongs to the universal ribosomal protein uL23 family. As to quaternary structure, part of the 50S ribosomal subunit. Contacts protein L29, and trigger factor when it is bound to the ribosome.

Its function is as follows. One of the early assembly proteins it binds 23S rRNA. One of the proteins that surrounds the polypeptide exit tunnel on the outside of the ribosome. Forms the main docking site for trigger factor binding to the ribosome. This chain is Large ribosomal subunit protein uL23, found in Treponema pallidum (strain Nichols).